Consider the following 102-residue polypeptide: MKIAVLGDKDTALGFKLAGAHEVYSFEDTPLDMERLKNKLNELVEREDIGIILITERFVQKIGLPDVTFPIILQVPDKSGSKFGEEAIKEIVRRAIGVELKR.

This sequence belongs to the V-ATPase F subunit family. As to quaternary structure, has multiple subunits with at least A(3), B(3), C, D, E, F, H, I and proteolipid K(x).

Its subcellular location is the cell membrane. In terms of biological role, component of the A-type ATP synthase that produces ATP from ADP in the presence of a proton gradient across the membrane. The chain is A-type ATP synthase subunit F from Thermococcus onnurineus (strain NA1).